Here is a 489-residue protein sequence, read N- to C-terminus: ATF/CREB activator 1 (489 aa).

Residues 384-447 (AWKRARLLER…QKMKKISRLH (64 aa)) enclose the bZIP domain. The interval 386–406 (KRARLLERNRIAASKCRQRKK) is basic motif. Positions 412–419 (LQREFDQI) are leucine-zipper.

It belongs to the bZIP family.

The protein resides in the nucleus. Transcriptional activator of promoters containing ATF/CREB sites. Can independently stimulate transcription through ATF/CREB sites. Important for a variety of biological functions including growth on non-optimal carbon sources. Regulates the expression of COS8. Has efficient silencing blocking activities. The chain is ATF/CREB activator 1 (ACA1) from Saccharomyces cerevisiae (strain ATCC 204508 / S288c) (Baker's yeast).